We begin with the raw amino-acid sequence, 284 residues long: NAD kinase (284 aa).

Aspartate 65 acts as the Proton acceptor in catalysis. Residues 65–66, 139–140, arginine 150, arginine 167, aspartate 169, and glutamine 239 contribute to the NAD(+) site; these read DG and ND.

The protein belongs to the NAD kinase family. It depends on a divalent metal cation as a cofactor.

The protein resides in the cytoplasm. It carries out the reaction NAD(+) + ATP = ADP + NADP(+) + H(+). Its function is as follows. Involved in the regulation of the intracellular balance of NAD and NADP, and is a key enzyme in the biosynthesis of NADP. Catalyzes specifically the phosphorylation on 2'-hydroxyl of the adenosine moiety of NAD to yield NADP. The sequence is that of NAD kinase from Desulfatibacillum aliphaticivorans.